Here is a 282-residue protein sequence, read N- to C-terminus: NAD(P)H-hydrate epimerase (282 aa).

The N-terminal 53 residues, 1–53 (MSGLRTLLGLGLLVAGSRLPRVISQQSVCRARPIWWGTQRRGSETMAGAAVKY), are a transit peptide targeting the mitochondrion. At S43 the chain carries Phosphoserine; by PKA. Residues 59-269 (AQAVDQELFN…ALEKKYQLNL (211 aa)) enclose the YjeF N-terminal domain. Residue 113-117 (NNGGD) coordinates (6S)-NADPHX. Position 114 (N114) interacts with K(+). K138 is subject to N6-succinyllysine. D179 serves as a coordination point for K(+). (6S)-NADPHX is bound by residues 183–189 (GFSFKGD) and D212. K(+) is bound at residue S215.

Belongs to the NnrE/AIBP family. Homodimer. Interacts with APOA1 and APOA2. K(+) is required as a cofactor. Post-translationally, undergoes physiological phosphorylation during sperm capacitation, downstream to PKA activation. As to expression, detected in testis and sperm (at protein level). Expressed at high levels in heart, liver, kidney, and testis.

Its subcellular location is the mitochondrion. It localises to the secreted. The enzyme catalyses (6R)-NADHX = (6S)-NADHX. It carries out the reaction (6R)-NADPHX = (6S)-NADPHX. Functionally, catalyzes the epimerization of the S- and R-forms of NAD(P)HX, a damaged form of NAD(P)H that is a result of enzymatic or heat-dependent hydration. This is a prerequisite for the S-specific NAD(P)H-hydrate dehydratase to allow the repair of both epimers of NAD(P)HX. Accelerates cholesterol efflux from endothelial cells to high-density lipoprotein (HDL) and thereby regulates angiogenesis. In Mus musculus (Mouse), this protein is NAD(P)H-hydrate epimerase.